A 202-amino-acid chain; its full sequence is Protein DCV1 (202 aa).

The first 18 residues, 1 to 18, serve as a signal peptide directing secretion; it reads MLNYKLILLFSSFLQLIS. 3 helical membrane passes run 91–107, 137–155, and 168–189; these read IGGLLISIPVATCLTFI, ILTLLSTIFACTVILLLCM, and LVWLANCSLFPLLVIGVHFLSF.

The protein resides in the membrane. The polypeptide is Protein DCV1 (DCV1) (Saccharomyces cerevisiae (strain ATCC 204508 / S288c) (Baker's yeast)).